We begin with the raw amino-acid sequence, 372 residues long: Probable arabinan endo-1,5-alpha-L-arabinosidase B (372 aa).

The first 16 residues, 1-16 (MTVLVALFCLVTWTLC), serve as a signal peptide directing secretion. Over residues 23-34 (STQGTQQPQQPE) the composition is skewed to low complexity. The segment at 23-52 (STQGTQQPQQPEKTPHPHPQPEDAFPPTHA) is disordered. Asp59 functions as the Proton acceptor in the catalytic mechanism. A glycan (N-linked (GlcNAc...) asparagine) is linked at Asn120. Glu252 acts as the Proton donor in catalysis. The N-linked (GlcNAc...) asparagine glycan is linked to Asn363.

This sequence belongs to the glycosyl hydrolase 43 family.

It is found in the secreted. The enzyme catalyses Endohydrolysis of (1-&gt;5)-alpha-arabinofuranosidic linkages in (1-&gt;5)-arabinans.. The protein operates within glycan metabolism; L-arabinan degradation. Functionally, endo-1,5-alpha-L-arabinanase involved in degradation of pectin. Its preferred substrate is linear 1,5-alpha-L-arabinan. This is Probable arabinan endo-1,5-alpha-L-arabinosidase B (abnB) from Aspergillus fumigatus (strain ATCC MYA-4609 / CBS 101355 / FGSC A1100 / Af293) (Neosartorya fumigata).